Reading from the N-terminus, the 861-residue chain is Integrator complex subunit 6-like (861 aa).

The VWFA domain maps to 3–227 (ILLFLIDTSA…QCLESLVQKV (225 aa)). Residue Ser617 is modified to Phosphoserine.

The protein is Integrator complex subunit 6-like (Ints6l) of Mus musculus (Mouse).